The primary structure comprises 244 residues: MHTPFIVALDFPSKQEVERFLRPFAGTPLFVKVGMELYYQEGPAIVAFLKEQGHAVFLDLKLHDIPNTVKQAMKGLARVGADLVNVHAAGGRRMMEAAIEGLDAGTPSGRMRPRCIAVTQLTSTDERMLHEELWISRPLVETVAHYAALAKESGLDGVVCSANEAAFIKERCGASFLAVTPGIRFADDAAHDQVRVVTPRKARALGSDYIVIGRSLTRAADPLRTYARLQHEWNGGERESTTPT.

Substrate is bound by residues Asp-10, Lys-32, 59–68, Thr-122, Arg-184, Gln-193, Gly-213, and Arg-214; that span reads DLKLHDIPNT. Catalysis depends on Lys-61, which acts as the Proton donor.

This sequence belongs to the OMP decarboxylase family. Type 1 subfamily. As to quaternary structure, homodimer.

The enzyme catalyses orotidine 5'-phosphate + H(+) = UMP + CO2. It participates in pyrimidine metabolism; UMP biosynthesis via de novo pathway; UMP from orotate: step 2/2. In terms of biological role, catalyzes the decarboxylation of orotidine 5'-monophosphate (OMP) to uridine 5'-monophosphate (UMP). This chain is Orotidine 5'-phosphate decarboxylase, found in Geobacillus kaustophilus (strain HTA426).